A 470-amino-acid chain; its full sequence is 3-isopropylmalate dehydratase large subunit (470 aa).

Positions 351, 411, and 414 each coordinate [4Fe-4S] cluster.

This sequence belongs to the aconitase/IPM isomerase family. LeuC type 1 subfamily. In terms of assembly, heterodimer of LeuC and LeuD. Requires [4Fe-4S] cluster as cofactor.

The catalysed reaction is (2R,3S)-3-isopropylmalate = (2S)-2-isopropylmalate. It participates in amino-acid biosynthesis; L-leucine biosynthesis; L-leucine from 3-methyl-2-oxobutanoate: step 2/4. Functionally, catalyzes the isomerization between 2-isopropylmalate and 3-isopropylmalate, via the formation of 2-isopropylmaleate. The protein is 3-isopropylmalate dehydratase large subunit of Rhodopseudomonas palustris (strain HaA2).